The primary structure comprises 142 residues: Hemoglobin subunit alpha (142 aa).

One can recognise a Globin domain in the interval 2–142 (VLSADDKANI…VSTVLTSKYR (141 aa)). Phosphoserine is present on S4. 2 positions are modified to N6-succinyllysine: K8 and K12. At K17 the chain carries N6-acetyllysine; alternate. At K17 the chain carries N6-succinyllysine; alternate. Y25 carries the post-translational modification Phosphotyrosine. S36 carries the post-translational modification Phosphoserine. At K41 the chain carries N6-succinyllysine. S50 bears the Phosphoserine mark. H59 provides a ligand contact to O2. H88 is a binding site for heme b. At T109 the chain carries Phosphothreonine. Residues S125 and S132 each carry the phosphoserine modification. Phosphothreonine is present on residues T135 and T138. Position 139 is a phosphoserine (S139).

This sequence belongs to the globin family. Heterotetramer of two alpha chains and two beta chains. As to expression, red blood cells.

In terms of biological role, involved in oxygen transport from the lung to the various peripheral tissues. Its function is as follows. Hemopressin acts as an antagonist peptide of the cannabinoid receptor CNR1. Hemopressin-binding efficiently blocks cannabinoid receptor CNR1 and subsequent signaling. The polypeptide is Hemoglobin subunit alpha (HBA) (Cricetomys gambianus (Northern giant pouched rat)).